The sequence spans 249 residues: uncharacterized protein (249 aa).

It belongs to the AIM2 family.

It localises to the cytoplasm. The protein resides in the nucleus. This is an uncharacterized protein from Schizosaccharomyces pombe (strain 972 / ATCC 24843) (Fission yeast).